Consider the following 214-residue polypeptide: LVLVNYLLFKGKWKVPFNPNDTFESEFYLDEKRSVKVPMMKIKEVTTPYVRDEELSCSVLELKYTGNASALFILPDQGKMQQVESSLQPETLKKWKDSLIPSIINDLRMPKFSISTDYSLEKEVLPELGIKKVFSQQADLSRITGTKDLYVSQVVHKAVLDVAETGTEATAATGVATVIRRQPRTLNFNQPFMVFITDMDSQSILFVAKITNPS.

It belongs to the serpin family.

The chain is Serine protease inhibitor 2.1 from Rattus norvegicus (Rat).